The following is a 42-amino-acid chain: Photosystem I reaction center subunit IX (42 aa).

Residues 7–27 (YLSTAPVLATLWFGFLAGLLI) form a helical membrane-spanning segment.

The protein belongs to the PsaJ family.

It is found in the plastid. The protein localises to the chloroplast thylakoid membrane. Functionally, may help in the organization of the PsaE and PsaF subunits. This chain is Photosystem I reaction center subunit IX, found in Marchantia polymorpha (Common liverwort).